A 307-amino-acid polypeptide reads, in one-letter code: Protoheme IX farnesyltransferase (307 aa).

9 helical membrane-spanning segments follow: residues 31 to 51 (VTQL…PGMV), 53 to 73 (WPVL…AFAI), 103 to 123 (TLVF…VYAN), 125 to 145 (LTMW…TILL), 153 to 173 (IVIG…AVAG), 179 to 199 (AWFL…ALAL), 223 to 243 (LLHI…PFVY), 246 to 266 (SGYI…AYAW), and 285 to 305 (ILYL…KFVP).

It belongs to the UbiA prenyltransferase family. Protoheme IX farnesyltransferase subfamily.

The protein localises to the cell inner membrane. It carries out the reaction heme b + (2E,6E)-farnesyl diphosphate + H2O = Fe(II)-heme o + diphosphate. It functions in the pathway porphyrin-containing compound metabolism; heme O biosynthesis; heme O from protoheme: step 1/1. Functionally, converts heme B (protoheme IX) to heme O by substitution of the vinyl group on carbon 2 of heme B porphyrin ring with a hydroxyethyl farnesyl side group. This is Protoheme IX farnesyltransferase from Cupriavidus taiwanensis (strain DSM 17343 / BCRC 17206 / CCUG 44338 / CIP 107171 / LMG 19424 / R1) (Ralstonia taiwanensis (strain LMG 19424)).